The chain runs to 445 residues: 2-oxoisovalerate dehydrogenase subunit alpha, mitochondrial (445 aa).

Residues 1–45 (MAVAIAAARVWRLNRGLSQAALLLLRQPGARGLARSHPPRQQQQF) constitute a mitochondrion transit peptide. The interval 33–52 (LARSHPPRQQQQFSSLDDKP) is disordered. Thiamine diphosphate contacts are provided by Tyr-158 and Arg-159. K(+) is bound at residue Ser-206. Ser-207 is a binding site for thiamine diphosphate. Positions 208, 211, and 212 each coordinate K(+). Glu-238 serves as a coordination point for Mg(2+). Residues Gly-239, Ala-240, and Arg-265 each coordinate thiamine diphosphate. Positions 267 and 269 each coordinate Mg(2+). Thiamine diphosphate is bound at residue His-336. At Ser-337 the chain carries Phosphoserine; by BCKDK. Position 338 is a phosphothreonine (Thr-338). Residues Ser-339 and Ser-347 each carry the phosphoserine modification. Residue Lys-356 is modified to N6-acetyllysine; alternate. Lys-356 is subject to N6-succinyllysine; alternate. Lys-380 is subject to N6-succinyllysine.

This sequence belongs to the BCKDHA family. In terms of assembly, heterotetramer of 2 alpha/BCKDHA and 2 beta chains/BCKDHB that forms the branched-chain alpha-keto acid decarboxylase (E1) component of the BCKD complex. The branched-chain alpha-ketoacid dehydrogenase is a large complex composed of three major building blocks E1, E2 and E3. It is organized around E2, a 24-meric cubic core composed of DBT, to which are associated 6 to 12 copies of E1, and approximately 6 copies of the dehydrogenase E3, a DLD dimer. Interacts with PPM1K. Requires thiamine diphosphate as cofactor. Mg(2+) is required as a cofactor. In terms of processing, phosphorylated at Ser-337 by BCKDK and dephosphorylated by protein phosphatase PPM1K.

The protein localises to the mitochondrion matrix. It catalyses the reaction N(6)-[(R)-lipoyl]-L-lysyl-[protein] + 3-methyl-2-oxobutanoate + H(+) = N(6)-[(R)-S(8)-2-methylpropanoyldihydrolipoyl]-L-lysyl-[protein] + CO2. Together with BCKDHB forms the heterotetrameric E1 subunit of the mitochondrial branched-chain alpha-ketoacid dehydrogenase (BCKD) complex. The BCKD complex catalyzes the multi-step oxidative decarboxylation of alpha-ketoacids derived from the branched-chain amino-acids valine, leucine and isoleucine producing CO2 and acyl-CoA which is subsequently utilized to produce energy. The E1 subunit catalyzes the first step with the decarboxylation of the alpha-ketoacid forming an enzyme-product intermediate. A reductive acylation mediated by the lipoylamide cofactor of E2 extracts the acyl group from the E1 active site for the next step of the reaction. This chain is 2-oxoisovalerate dehydrogenase subunit alpha, mitochondrial, found in Homo sapiens (Human).